We begin with the raw amino-acid sequence, 194 residues long: ATP-dependent Clp protease proteolytic subunit (194 aa).

S98 (nucleophile) is an active-site residue. The active site involves H123.

Belongs to the peptidase S14 family. As to quaternary structure, component of the chloroplastic Clp protease core complex.

Its subcellular location is the plastid. The protein localises to the cyanelle. It catalyses the reaction Hydrolysis of proteins to small peptides in the presence of ATP and magnesium. alpha-casein is the usual test substrate. In the absence of ATP, only oligopeptides shorter than five residues are hydrolyzed (such as succinyl-Leu-Tyr-|-NHMec, and Leu-Tyr-Leu-|-Tyr-Trp, in which cleavage of the -Tyr-|-Leu- and -Tyr-|-Trp bonds also occurs).. Its function is as follows. Cleaves peptides in various proteins in a process that requires ATP hydrolysis. Has a chymotrypsin-like activity. Plays a major role in the degradation of misfolded proteins. The protein is ATP-dependent Clp protease proteolytic subunit (clpP-A) of Cyanophora paradoxa.